The sequence spans 335 residues: Tetraacyldisaccharide 4'-kinase (335 aa).

59–66 serves as a coordination point for ATP; sequence TAGGNGKT.

It belongs to the LpxK family.

It catalyses the reaction a lipid A disaccharide + ATP = a lipid IVA + ADP + H(+). It participates in glycolipid biosynthesis; lipid IV(A) biosynthesis; lipid IV(A) from (3R)-3-hydroxytetradecanoyl-[acyl-carrier-protein] and UDP-N-acetyl-alpha-D-glucosamine: step 6/6. Transfers the gamma-phosphate of ATP to the 4'-position of a tetraacyldisaccharide 1-phosphate intermediate (termed DS-1-P) to form tetraacyldisaccharide 1,4'-bis-phosphate (lipid IVA). The protein is Tetraacyldisaccharide 4'-kinase of Vibrio vulnificus (strain YJ016).